The following is a 152-amino-acid chain: Transcriptional repressor NrdR (152 aa).

Residues 1-10 (MKCPSCQHNG) show a composition bias toward polar residues. A disordered region spans residues 1–21 (MKCPSCQHNGSRVLDSRPADE). The segment at 3-34 (CPSCQHNGSRVLDSRPADEGKSIRRRRECEAC) is a zinc-finger region. In terms of domain architecture, ATP-cone spans 49-139 (LIVVKKEGVR…VYRQFKDINV (91 aa)).

It belongs to the NrdR family. The cofactor is Zn(2+).

Negatively regulates transcription of bacterial ribonucleotide reductase nrd genes and operons by binding to NrdR-boxes. The protein is Transcriptional repressor NrdR of Bacillus velezensis (strain DSM 23117 / BGSC 10A6 / LMG 26770 / FZB42) (Bacillus amyloliquefaciens subsp. plantarum).